The primary structure comprises 104 residues: Large ribosomal subunit protein uL23 (104 aa).

This sequence belongs to the universal ribosomal protein uL23 family. Part of the 50S ribosomal subunit. Contacts protein L29, and trigger factor when it is bound to the ribosome.

Functionally, one of the early assembly proteins it binds 23S rRNA. One of the proteins that surrounds the polypeptide exit tunnel on the outside of the ribosome. Forms the main docking site for trigger factor binding to the ribosome. The sequence is that of Large ribosomal subunit protein uL23 from Nostoc sp. (strain PCC 7120 / SAG 25.82 / UTEX 2576).